A 104-amino-acid polypeptide reads, in one-letter code: Replication restart protein PriB (104 aa).

The 101-residue stretch at M1–D101 folds into the SSB domain.

It belongs to the PriB family. Homodimer. Interacts with PriA and DnaT. Component of the replication restart primosome. Primosome assembly occurs via a 'hand-off' mechanism. PriA binds to replication forks, subsequently PriB then DnaT bind; DnaT then displaces ssDNA to generate the helicase loading substrate.

Involved in the restart of stalled replication forks, which reloads the replicative helicase on sites other than the origin of replication; the PriA-PriB pathway is the major replication restart pathway. During primosome assembly it facilitates complex formation between PriA and DnaT on DNA; stabilizes PriA on DNA. Stimulates the DNA unwinding activity of PriA helicase. This is Replication restart protein PriB from Escherichia coli (strain ATCC 8739 / DSM 1576 / NBRC 3972 / NCIMB 8545 / WDCM 00012 / Crooks).